The following is a 372-amino-acid chain: Tribbles homolog 1 (372 aa).

Disordered regions lie at residues methionine 1–alanine 26 and arginine 49–serine 85. Positions tyrosine 59 to serine 74 are enriched in pro residues. The Protein kinase domain occupies isoleucine 91–phenylalanine 338. The short motif at aspartate 355–glutamate 360 is the COP1-binding element.

The protein belongs to the protein kinase superfamily. CAMK Ser/Thr protein kinase family. Tribbles subfamily. Monomer. Interacts (via protein kinase domain) with CEBPA. Interacts with COP1.

Its function is as follows. Adapter protein involved in protein degradation by interacting with COP1 ubiquitin ligase. Promotes CEBPA degradation and inhibits its function. Controls macrophage, eosinophil and neutrophil differentiation via the COP1-binding domain. Regulates myeloid cell differentiation by altering the expression of CEBPA in a COP1-dependent manner. Interacts with MAPK kinases and regulates activation of MAP kinases, but has no kinase activity. This is Tribbles homolog 1 from Mus musculus (Mouse).